A 703-amino-acid chain; its full sequence is Lethal(3)malignant brain tumor-like protein 2 (703 aa).

The segment at 1–70 (MEKPRGTEET…AGELPTSPLH (70 aa)) is disordered. Ser13 is modified (phosphoserine). The span at 15–25 (PMEEEEDDDLE) shows a compositional bias: acidic residues. Over residues 35–49 (SYNSSAGSESSSYLE) the composition is skewed to low complexity. Acidic residues predominate over residues 50–60 (ESSEAENEDRE). Ser67 is modified (phosphoserine). An FCS-type zinc finger spans residues 81 to 116 (DGSGSEPAVCEMCGIVGTREAFFSKTKRFCSVSCSR). Positions 90, 93, 110, and 114 each coordinate Zn(2+). MBT repeat units lie at residues 179 to 283 (FDWG…LVPP), 291 to 391 (TDWK…IKMS), 397 to 500 (MSHH…LTPP), and 508 to 604 (FDWE…LQPP). Ser338 bears the Phosphoserine mark. A Glycyl lysine isopeptide (Lys-Gly) (interchain with G-Cter in SUMO2) cross-link involves residue Lys405. 2 disordered regions span residues 604 to 649 (PVSA…KKPL) and 672 to 703 (VKEEHQDLPSPDRSPSPLLPLPTESIKQERDS). Basic residues predominate over residues 619-634 (TKKKKKQFGKKRKRIP). Residues Lys647 and Lys673 each participate in a glycyl lysine isopeptide (Lys-Gly) (interchain with G-Cter in SUMO2) cross-link. Phosphoserine is present on residues Ser681, Ser685, and Ser687. A Glycyl lysine isopeptide (Lys-Gly) (interchain with G-Cter in SUMO1); alternate cross-link involves residue Lys698. Residue Lys698 forms a Glycyl lysine isopeptide (Lys-Gly) (interchain with G-Cter in SUMO2); alternate linkage.

In terms of assembly, part of the E2F6.com-1 complex in G0 phase composed of E2F6, MGA, MAX, TFDP1, CBX3, BAT8, EUHMTASE1, RING1, RNF2, MBLR, BAT8 and YAF2.

Its subcellular location is the nucleus. Putative Polycomb group (PcG) protein. PcG proteins maintain the transcriptionally repressive state of genes, probably via a modification of chromatin, rendering it heritably changed in its expressibility. Its association with a chromatin-remodeling complex suggests that it may contribute to prevent expression of genes that trigger the cell into mitosis. Binds to monomethylated and dimethylated 'Lys-20' on histone H4. Binds histone H3 peptides that are monomethylated or dimethylated on 'Lys-4', 'Lys-9' or 'Lys-27'. The protein is Lethal(3)malignant brain tumor-like protein 2 (L3mbtl2) of Rattus norvegicus (Rat).